A 91-amino-acid polypeptide reads, in one-letter code: ATP synthase epsilon chain (91 aa).

The protein belongs to the ATPase epsilon chain family. In terms of assembly, F-type ATPases have 2 components, CF(1) - the catalytic core - and CF(0) - the membrane proton channel. CF(1) has five subunits: alpha(3), beta(3), gamma(1), delta(1), epsilon(1). CF(0) has three main subunits: a, b and c.

The protein resides in the cell membrane. Produces ATP from ADP in the presence of a proton gradient across the membrane. The sequence is that of ATP synthase epsilon chain (atpC) from Micrococcus luteus (strain ATCC 4698 / DSM 20030 / JCM 1464 / CCM 169 / CCUG 5858 / IAM 1056 / NBRC 3333 / NCIMB 9278 / NCTC 2665 / VKM Ac-2230) (Micrococcus lysodeikticus).